The sequence spans 68 residues: ATP synthase subunit K, mitochondrial (68 aa).

A helical membrane pass occupies residues His-15 to Pro-31.

The protein belongs to the ATP19 family. F-type ATPases have 2 components, CF(1) - the catalytic core - and CF(0) - the membrane proton channel. In yeast, the dimeric form of ATP synthase consists of 17 polypeptides: alpha, beta, gamma, delta, epsilon, 4 (B), 5 (OSCP), 6 (A), 8, 9 (C), d, E (Tim11), f, g, h, i/j and k.

It is found in the mitochondrion inner membrane. Functionally, mitochondrial membrane ATP synthase (F(1)F(0) ATP synthase or Complex V) produces ATP from ADP in the presence of a proton gradient across the membrane which is generated by electron transport complexes of the respiratory chain. F-type ATPases consist of two structural domains, F(1) - containing the extramembraneous catalytic core and F(0) - containing the membrane proton channel, linked together by a central stalk and a peripheral stalk. During catalysis, ATP synthesis in the catalytic domain of F(1) is coupled via a rotary mechanism of the central stalk subunits to proton translocation. Part of the complex F(0) domain. Minor subunit located with subunit a in the membrane. The K chain binds the dimeric form by interacting with the G and E chains. This is ATP synthase subunit K, mitochondrial (ATP19) from Saccharomyces cerevisiae (strain ATCC 204508 / S288c) (Baker's yeast).